The chain runs to 332 residues: tRNA(Ile)-lysidine synthase (332 aa).

Residue 39-44 (SGGADS) participates in ATP binding.

This sequence belongs to the tRNA(Ile)-lysidine synthase family.

It is found in the cytoplasm. It catalyses the reaction cytidine(34) in tRNA(Ile2) + L-lysine + ATP = lysidine(34) in tRNA(Ile2) + AMP + diphosphate + H(+). Ligates lysine onto the cytidine present at position 34 of the AUA codon-specific tRNA(Ile) that contains the anticodon CAU, in an ATP-dependent manner. Cytidine is converted to lysidine, thus changing the amino acid specificity of the tRNA from methionine to isoleucine. The polypeptide is tRNA(Ile)-lysidine synthase (Leifsonia xyli subsp. xyli (strain CTCB07)).